The chain runs to 144 residues: Large ribosomal subunit protein uL15 (144 aa).

Residues 20 to 49 (GRGIGSGLGKTGGRGHKGQKSRSGGFHKVG) are disordered. The span at 21-31 (RGIGSGLGKTG) shows a compositional bias: gly residues.

This sequence belongs to the universal ribosomal protein uL15 family. As to quaternary structure, part of the 50S ribosomal subunit.

Its function is as follows. Binds to the 23S rRNA. This Neisseria gonorrhoeae (strain ATCC 700825 / FA 1090) protein is Large ribosomal subunit protein uL15.